A 1346-amino-acid polypeptide reads, in one-letter code: DNA-directed RNA polymerase subunit beta (1346 aa).

This sequence belongs to the RNA polymerase beta chain family. As to quaternary structure, the RNAP catalytic core consists of 2 alpha, 1 beta, 1 beta' and 1 omega subunit. When a sigma factor is associated with the core the holoenzyme is formed, which can initiate transcription.

The enzyme catalyses RNA(n) + a ribonucleoside 5'-triphosphate = RNA(n+1) + diphosphate. Its function is as follows. DNA-dependent RNA polymerase catalyzes the transcription of DNA into RNA using the four ribonucleoside triphosphates as substrates. This chain is DNA-directed RNA polymerase subunit beta, found in Psychromonas ingrahamii (strain DSM 17664 / CCUG 51855 / 37).